The chain runs to 422 residues: WD repeat and SOCS box-containing protein 1 (422 aa).

WD repeat units follow at residues 124 to 165 (SRCV…LLLN), 168 to 208 (DHTE…NMMK), 212 to 251 (GHQN…MIRK), 254 to 293 (GHYN…ILFE), and 309 to 346 (DNGR…SYPV). One can recognise an SOCS box domain in the interval 374 to 422 (NAYFWSTPKYVSSLQHLCRMAIRRVMNTNEVKKLPIPQKIMEFLTYQTM).

In terms of assembly, component of a probable ECS E3 ubiquitin-protein ligase complex that contains the Elongin BC complex.

The protein operates within protein modification; protein ubiquitination. Functionally, probable substrate-recognition component of a SCF-like ECS (Elongin-Cullin-SOCS-box protein) E3 ubiquitin-protein ligase complex which mediates the ubiquitination and subsequent proteasomal degradation of target proteins. The polypeptide is WD repeat and SOCS box-containing protein 1 (wsb1) (Xenopus tropicalis (Western clawed frog)).